Here is a 316-residue protein sequence, read N- to C-terminus: Protoheme IX farnesyltransferase (316 aa).

9 helical membrane-spanning segments follow: residues Val-32 to Asn-52, Pro-53 to Leu-73, Ile-93 to Phe-113, Val-116 to Phe-136, Asn-152 to Thr-172, Thr-180 to Phe-200, Val-221 to Ser-241, Leu-252 to Met-271, and Ile-289 to Val-309.

Belongs to the UbiA prenyltransferase family. Protoheme IX farnesyltransferase subfamily.

Its subcellular location is the cell inner membrane. It catalyses the reaction heme b + (2E,6E)-farnesyl diphosphate + H2O = Fe(II)-heme o + diphosphate. It functions in the pathway porphyrin-containing compound metabolism; heme O biosynthesis; heme O from protoheme: step 1/1. In terms of biological role, converts heme B (protoheme IX) to heme O by substitution of the vinyl group on carbon 2 of heme B porphyrin ring with a hydroxyethyl farnesyl side group. This Rhizobium etli (strain ATCC 51251 / DSM 11541 / JCM 21823 / NBRC 15573 / CFN 42) protein is Protoheme IX farnesyltransferase.